The sequence spans 150 residues: Large ribosomal subunit protein bL9 (150 aa).

It belongs to the bacterial ribosomal protein bL9 family.

Binds to the 23S rRNA. This is Large ribosomal subunit protein bL9 from Limosilactobacillus reuteri (strain DSM 20016) (Lactobacillus reuteri).